The following is a 140-amino-acid chain: Perlin matrix protein (140 aa).

The N-terminal stretch at M1 to A26 is a signal peptide.

It belongs to the N16 matrix protein family. As to quaternary structure, heterooligomer; disulfide-linked. Pif97, Pif80, N16 and other proteins form a complex. In terms of tissue distribution, component of conchiolin, the organic matrix of nacre. Only expressed in the dorsal region of the mantle.

It localises to the secreted. The protein resides in the extracellular space. The protein localises to the extracellular matrix. Its function is as follows. May be specifically involved in the formation of the nacreous layer. The polypeptide is Perlin matrix protein (Margaritifera margaritifera (Freshwater pearl mussel)).